Reading from the N-terminus, the 2059-residue chain is Desmoplakin-A (2059 aa).

Residues 1 to 11 (MSLSGSQTRLH) are compositionally biased toward polar residues. The segment at 1–25 (MSLSGSQTRLHQISRRSSSRPDLTA) is disordered. 2 coiled-coil regions span residues 320 to 354 (IPQK…LLKN) and 397 to 453 (FKEA…VQTL). The tract at residues 665-690 (EVSSGKTATGVSSGKTATGVSSGKTS) is disordered. The span at 671 to 690 (TATGVSSGKTATGVSSGKTS) shows a compositional bias: low complexity. 2 coiled-coil regions span residues 1062 to 1229 (MEEL…AELE) and 1261 to 1383 (LQQD…LQQR). Plectin repeat units lie at residues 1450–1488 (YLGG…TLEL), 1489–1526 (LEAQ…KDKL), 1564–1602 (LLEA…NEIL), 1666–1694 (IVDP…FLEL), 1847–1885 (LLEA…SVKL), and 1923–1961 (FLEF…AQKL). Residues 2008–2059 (KGISSPYNVSSGPSSRSGSRAGSRTGSRSGSRRGSVDYSSSSVSYTFFSSAS) form a disordered region. Positions 2011 to 2059 (SSPYNVSSGPSSRSGSRAGSRTGSRSGSRRGSVDYSSSSVSYTFFSSAS) are enriched in low complexity.

The protein belongs to the plakin or cytolinker family.

The protein resides in the cell junction. It is found in the desmosome. Its subcellular location is the cell membrane. Functionally, involved in the organization of desmosome cell-cell junctions. Of particular importance in cell adhesion in the skin and during cardiac development. May also play a role in the regulation of Wnt, TGF-beta and Hippo signaling pathways. The polypeptide is Desmoplakin-A (Danio rerio (Zebrafish)).